The chain runs to 320 residues: Pyrroline-5-carboxylate reductase 2 (320 aa).

An N-acetylserine modification is found at serine 2. NADP(+) contacts are provided by residues 6–11 (IGAGQL) and serine 34. NADPH-binding residues include alanine 8, glutamine 10, leucine 11, serine 34, glutamate 36, asparagine 56, valine 70, lysine 71, and alanine 97. NADP(+)-binding positions include asparagine 56, 69–72 (AVKP), and 95–97 (CAA). Glutamate 164 serves as a coordination point for L-proline. Asparagine 230 lines the NADPH pocket. L-proline is bound by residues alanine 237 and threonine 238. Positions 296-305 (TVSTLTPSSP) are enriched in low complexity. The segment at 296–320 (TVSTLTPSSPGKLLTRSLALGGKKD) is disordered. Serine 304 carries the post-translational modification Phosphoserine.

This sequence belongs to the pyrroline-5-carboxylate reductase family. As to quaternary structure, homodecamer; composed of 5 homodimers. Interacts with LTO1.

The protein localises to the cytoplasm. It localises to the mitochondrion. It carries out the reaction L-proline + NADP(+) = (S)-1-pyrroline-5-carboxylate + NADPH + 2 H(+). It catalyses the reaction L-proline + NAD(+) = (S)-1-pyrroline-5-carboxylate + NADH + 2 H(+). Its pathway is amino-acid biosynthesis; L-proline biosynthesis; L-proline from L-glutamate 5-semialdehyde: step 1/1. In terms of biological role, oxidoreductase that catalyzes the last step in proline biosynthesis, which corresponds to the reduction of pyrroline-5-carboxylate to L-proline using NAD(P)H. At physiologic concentrations, has higher specific activity in the presence of NADH. Involved in cellular response to oxidative stress. In some cell types, such as erythrocytes, its primary function may be the generation of NADP(+). The chain is Pyrroline-5-carboxylate reductase 2 (PYCR2) from Pongo abelii (Sumatran orangutan).